The primary structure comprises 347 residues: uncharacterized protein (347 aa).

Coiled coils occupy residues 148-201 (DQQS…EKDG) and 261-298 (LENL…DTFS). The disordered stretch occupies residues 151–203 (SISNLRKEEKEKQKENENENENENENENENEKENQELDKKVNQTNDNEKDGDE). Over residues 155 to 167 (LRKEEKEKQKENE) the composition is skewed to basic and acidic residues. Positions 168–178 (NENENENENEN) are enriched in acidic residues. Positions 179–191 (ENEKENQELDKKV) are enriched in basic and acidic residues.

This is an uncharacterized protein from Dictyostelium discoideum (Social amoeba).